Here is a 418-residue protein sequence, read N- to C-terminus: Ras association domain-containing protein 5 (418 aa).

Positions 1 to 118 (MAMASPAIGQ…QPQDPRVPAE (118 aa)) are disordered. Residue alanine 2 is modified to N-acetylthreonine. Positions 77 to 89 (SRPARPLRPGLQQ) are enriched in low complexity. The segment at 122-170 (GHCFAELVLPGGPGWCDLCGREVLRQALRCTNCKFTCHPECRSLIQLDC) adopts a Phorbol-ester/DAG-type zinc-finger fold. 2 positions are modified to phosphoserine: serine 182 and serine 279. In terms of domain architecture, Ras-associating spans 274 to 364 (TDKRTSFYLP…LSFVLKENET (91 aa)). The residue at position 352 (threonine 352) is a Phosphothreonine. The SARAH domain maps to 366 to 413 (EVEWDAFSIPELQNFLTILEKEEQDKIQQVQKKYDKFRQKLEEALRES).

Interacts directly with activated HRAS; a RASSF5-STK4/MST1 complex probably associates with activated HRAS. Interacts with KRAS. Probably interacts with Ras-like GTPases RRAS, MRAS, RAP1B, RAP2A and RALA. Interacts with RRAS2. Can self-associate. Interacts with RSSF1 isoform A. The RSSF1 isoform A-RSSF5 heterodimer probably mediates the association of RSSF1 with HRAS. Isoform 2 interacts with activated RAP1A and ITGAL/LFA-1. Binds STK4/MST1, inhibiting STK4/MST1 autoactivation. Widely expressed. Frequently down-regulated in lung tumor cell lines and primary lung tumors.

It localises to the cytoplasm. The protein localises to the cytoskeleton. Potential tumor suppressor. Seems to be involved in lymphocyte adhesion by linking RAP1A activation upon T-cell receptor or chemokine stimulation to integrin activation. Isoform 2 stimulates lymphocyte polarization and the patch-like distribution of ITGAL/LFA-1, resulting in an enhanced adhesion to ICAM1. Together with RAP1A may participate in regulation of microtubule growth. The association of isoform 2 with activated RAP1A is required for directional movement of endothelial cells during wound healing. May be involved in regulation of Ras apoptotic function. The RASSF5-STK4/MST1 complex may mediate HRAS and KRAS induced apoptosis. The sequence is that of Ras association domain-containing protein 5 (RASSF5) from Homo sapiens (Human).